The chain runs to 498 residues: Glutamyl-tRNA(Gln) amidotransferase subunit A (498 aa).

Catalysis depends on charge relay system residues Lys79 and Ser154. The active-site Acyl-ester intermediate is Ser178.

The protein belongs to the amidase family. GatA subfamily. In terms of assembly, heterotrimer of A, B and C subunits.

It catalyses the reaction L-glutamyl-tRNA(Gln) + L-glutamine + ATP + H2O = L-glutaminyl-tRNA(Gln) + L-glutamate + ADP + phosphate + H(+). Functionally, allows the formation of correctly charged Gln-tRNA(Gln) through the transamidation of misacylated Glu-tRNA(Gln) in organisms which lack glutaminyl-tRNA synthetase. The reaction takes place in the presence of glutamine and ATP through an activated gamma-phospho-Glu-tRNA(Gln). This Psychrobacter cryohalolentis (strain ATCC BAA-1226 / DSM 17306 / VKM B-2378 / K5) protein is Glutamyl-tRNA(Gln) amidotransferase subunit A.